The sequence spans 403 residues: Glucosyl-3-phosphoglycerate synthase (403 aa).

Aspartate 150 contributes to the a divalent metal cation binding site. 189–192 is a binding site for (2R)-3-phosphoglycerate; it reads GRVT. Histidine 273 provides a ligand contact to a divalent metal cation.

This sequence belongs to the glycosyltransferase 2 family. In terms of assembly, homodimer. Mn(2+) serves as cofactor. It depends on Co(2+) as a cofactor. Mg(2+) is required as a cofactor. The cofactor is Ni(2+).

The catalysed reaction is an NDP-alpha-D-glucose + (2R)-3-phosphoglycerate = (2R)-2-O-(alpha-D-glucopyranosyl)-3-phospho-glycerate + a ribonucleoside 5'-diphosphate + H(+). Involved in the biosynthesis of 6-O-methylglucose lipopolysaccarides (MGLPs). Catalyzes the transfer of a glucose (Glc) moiety from uridine diphosphate (UDP-Glc) to the position 2 of 3-phospho-D-glycerate (3-PGA) to form glucosyl-3-phosphoglycerate (GPG). GpgS is most active with UDP-glucose, followed by GDP-glucose, ADP-glucose, and to a lesser extent, TDP-glucose. 3-PGA is the only acceptor for these glucosyl donors. The chain is Glucosyl-3-phosphoglycerate synthase from Persephonella marina (strain DSM 14350 / EX-H1).